The sequence spans 392 residues: Formate-dependent phosphoribosylglycinamide formyltransferase (392 aa).

N(1)-(5-phospho-beta-D-ribosyl)glycinamide is bound by residues 22-23 (EL) and glutamate 82. ATP is bound by residues arginine 114, lysine 155, 160-165 (SSGKGQ), 195-198 (EGVV), and glutamate 203. One can recognise an ATP-grasp domain in the interval 119–308 (RLAAEELGLP…EFALHVRAFL (190 aa)). Positions 267 and 279 each coordinate Mg(2+). Residues aspartate 286, lysine 355, and 362-363 (RR) each bind N(1)-(5-phospho-beta-D-ribosyl)glycinamide.

Belongs to the PurK/PurT family. Homodimer.

It catalyses the reaction N(1)-(5-phospho-beta-D-ribosyl)glycinamide + formate + ATP = N(2)-formyl-N(1)-(5-phospho-beta-D-ribosyl)glycinamide + ADP + phosphate + H(+). The protein operates within purine metabolism; IMP biosynthesis via de novo pathway; N(2)-formyl-N(1)-(5-phospho-D-ribosyl)glycinamide from N(1)-(5-phospho-D-ribosyl)glycinamide (formate route): step 1/1. In terms of biological role, involved in the de novo purine biosynthesis. Catalyzes the transfer of formate to 5-phospho-ribosyl-glycinamide (GAR), producing 5-phospho-ribosyl-N-formylglycinamide (FGAR). Formate is provided by PurU via hydrolysis of 10-formyl-tetrahydrofolate. The protein is Formate-dependent phosphoribosylglycinamide formyltransferase of Salmonella choleraesuis (strain SC-B67).